The primary structure comprises 260 residues: NH(3)-dependent NAD(+) synthetase (260 aa).

31–38 (GLSGGLDS) is an ATP binding site. Asp37 contributes to the Mg(2+) binding site. Arg112 provides a ligand contact to deamido-NAD(+). Thr132 is a binding site for ATP. Glu137 is a Mg(2+) binding site. Lys161 and Ser183 together coordinate ATP.

It belongs to the NAD synthetase family. In terms of assembly, homodimer.

It carries out the reaction deamido-NAD(+) + NH4(+) + ATP = AMP + diphosphate + NAD(+) + H(+). Its pathway is cofactor biosynthesis; NAD(+) biosynthesis; NAD(+) from deamido-NAD(+) (ammonia route): step 1/1. Catalyzes the ATP-dependent amidation of deamido-NAD to form NAD. Uses ammonia as a nitrogen source. The polypeptide is NH(3)-dependent NAD(+) synthetase (Helicobacter acinonychis (strain Sheeba)).